The chain runs to 1328 residues: ABC transporter G family member 2 (1328 aa).

Residues 53-299 enclose the ABC transporter 1 domain; sequence VTARNLSMSI…FEGLGFKLPK (247 aa). 91-98 provides a ligand contact to ATP; it reads GSPGCGKT. Residues 388 to 665 form the ABC transmembrane type-2 1 domain; that stretch reads ISSQVAVRMR…FGMYFFLKNV (278 aa). The next 7 helical transmembrane spans lie at 398–418, 428–448, 477–497, 504–524, 534–554, 559–579, and 642–662; these read IIKS…LDLN, LIFF…AILF, IPIA…MCGL, FIYF…FFKM, LASV…GFMA, IGGW…FEGL, and IDLL…YFFL. Residues 670 to 691 are disordered; the sequence is RASDPKNDKRSKKASKRSKKIK. Positions 678 to 689 are enriched in basic residues; the sequence is KRSKKASKRSKK. Residues 721 to 960 enclose the ABC transporter 2 domain; that stretch reads VYEVDVKKDG…DLLGYFENHG (240 aa). 755-762 is an ATP binding site; it reads GPSGAGKS. The region spanning 1049–1286 is the ABC transmembrane type-2 2 domain; that stretch reads VRRVQNIRTR…PICPITNGNQ (238 aa). The next 6 membrane-spanning stretches (helical) occupy residues 1059-1076, 1087-1107, 1128-1148, 1172-1192, 1197-1217, and 1303-1323; these read LMRS…FVRM, VSIL…SIPI, IYLF…AIIY, FISF…ATVL, IAHA…GFMI, and AVIF…LKFI.

This sequence belongs to the ABC transporter superfamily. ABCG family. PDR (TC 3.A.1.205) subfamily.

The protein localises to the endosome membrane. Functionally, required for endocytosis and endosomal pH regulation. This Dictyostelium discoideum (Social amoeba) protein is ABC transporter G family member 2 (abcG2).